The following is a 397-amino-acid chain: Glia-derived nexin (397 aa).

The first 19 residues, 1-19, serve as a signal peptide directing secretion; the sequence is MNWHFPFFILTTVTLYSVH. An N-linked (GlcNAc...) asparagine glycan is attached at asparagine 159.

It belongs to the serpin family. As to expression, most abundant in seminal vesicles.

The protein resides in the secreted. Its subcellular location is the extracellular space. Functionally, serine protease inhibitor with activity toward thrombin, trypsin, and urokinase. Promotes neurite extension by inhibiting thrombin. Binds heparin. In Mus musculus (Mouse), this protein is Glia-derived nexin (Serpine2).